The following is a 565-amino-acid chain: NAD-dependent malic enzyme (565 aa).

Catalysis depends on Tyr104, which acts as the Proton donor. Residue Arg157 participates in NAD(+) binding. Lys175 functions as the Proton acceptor in the catalytic mechanism. Residues Glu246, Asp247, and Asp270 each contribute to the a divalent metal cation site. 2 residues coordinate NAD(+): Asp270 and Asn418.

This sequence belongs to the malic enzymes family. Homotetramer. The cofactor is Mg(2+). Requires Mn(2+) as cofactor.

The catalysed reaction is (S)-malate + NAD(+) = pyruvate + CO2 + NADH. The enzyme catalyses oxaloacetate + H(+) = pyruvate + CO2. The chain is NAD-dependent malic enzyme from Escherichia coli O139:H28 (strain E24377A / ETEC).